The primary structure comprises 497 residues: 3-octaprenyl-4-hydroxybenzoate carboxy-lyase (497 aa).

Residue asparagine 175 participates in Mn(2+) binding. Residues 178-180 (IYR), 192-194 (RWL), and 197-198 (RG) contribute to the prenylated FMN site. A Mn(2+)-binding site is contributed by glutamate 241. The Proton donor role is filled by aspartate 290.

It belongs to the UbiD family. In terms of assembly, homohexamer. Prenylated FMN is required as a cofactor. Requires Mn(2+) as cofactor.

It is found in the cell membrane. It catalyses the reaction a 4-hydroxy-3-(all-trans-polyprenyl)benzoate + H(+) = a 2-(all-trans-polyprenyl)phenol + CO2. Its pathway is cofactor biosynthesis; ubiquinone biosynthesis. Catalyzes the decarboxylation of 3-octaprenyl-4-hydroxy benzoate to 2-octaprenylphenol, an intermediate step in ubiquinone biosynthesis. This is 3-octaprenyl-4-hydroxybenzoate carboxy-lyase from Shigella dysenteriae serotype 1 (strain Sd197).